The chain runs to 475 residues: NADH-quinone oxidoreductase subunit N 1 (475 aa).

14 helical membrane passes run 8–28 (VMPLMTASGISILLILVEAAT), 36–56 (LFAILGFLLVFLSLPFSPSEP), 67–87 (GGFFTYTATVFSIGGLLITLI), 100–120 (GEYYIILFMAVVGMMLMSAAA), 122–142 (LTILFIGLELMSIALYVLAGI), 157–177 (FLLGAFASGIFLYGIALIYGA), 199–219 (FLSGIALLMIGLLFKVAAVPF), 244–264 (AAALSSMILVGISIAPILETF), 268–288 (PTAIAMIATLTMFFGNIAALI), 295–315 (MFAYSSIAHAGYMLIGIATGT), 322–342 (VLYYIFLYTLMNIGAFGIIIL), 366–386 (AFLMAMFMFSLAGIPPFGGFI), 403–423 (LAVAGVIASAVSVSYYLRVVI), and 443–463 (ATIALVAFLVLLFGIYPSLLI).

This sequence belongs to the complex I subunit 2 family. In terms of assembly, NDH-1 is composed of 14 different subunits. Subunits NuoA, H, J, K, L, M, N constitute the membrane sector of the complex.

It is found in the cell inner membrane. The enzyme catalyses a quinone + NADH + 5 H(+)(in) = a quinol + NAD(+) + 4 H(+)(out). In terms of biological role, NDH-1 shuttles electrons from NADH, via FMN and iron-sulfur (Fe-S) centers, to quinones in the respiratory chain. The immediate electron acceptor for the enzyme in this species is believed to be a menaquinone. Couples the redox reaction to proton translocation (for every two electrons transferred, four hydrogen ions are translocated across the cytoplasmic membrane), and thus conserves the redox energy in a proton gradient. The polypeptide is NADH-quinone oxidoreductase subunit N 1 (Chloroherpeton thalassium (strain ATCC 35110 / GB-78)).